The sequence spans 102 residues: Alpha-hemoglobin-stabilizing protein (102 aa).

This sequence belongs to the AHSP family. As to quaternary structure, monomer. Forms a heterodimer with free alpha-hemoglobin. Does not bind beta-hemoglobin nor alpha(2)beta(2) hemoglobin A. Expressed in blood and bone marrow.

The protein localises to the cytoplasm. Functionally, acts as a chaperone to prevent the harmful aggregation of alpha-hemoglobin during normal erythroid cell development. Specifically protects free alpha-hemoglobin from precipitation. It is predicted to modulate pathological states of alpha-hemoglobin excess such as beta-thalassemia. The chain is Alpha-hemoglobin-stabilizing protein (AHSP) from Homo sapiens (Human).